Consider the following 156-residue polypeptide: Small ribosomal subunit protein uS7 (156 aa).

It belongs to the universal ribosomal protein uS7 family. Part of the 30S ribosomal subunit. Contacts proteins S9 and S11.

In terms of biological role, one of the primary rRNA binding proteins, it binds directly to 16S rRNA where it nucleates assembly of the head domain of the 30S subunit. Is located at the subunit interface close to the decoding center, probably blocks exit of the E-site tRNA. The protein is Small ribosomal subunit protein uS7 of Pseudomonas aeruginosa (strain LESB58).